Consider the following 284-residue polypeptide: L-ribulose-5-phosphate 3-epimerase UlaE (284 aa).

The protein belongs to the L-ribulose-5-phosphate 3-epimerase family.

The catalysed reaction is L-ribulose 5-phosphate = L-xylulose 5-phosphate. Its pathway is cofactor degradation; L-ascorbate degradation; D-xylulose 5-phosphate from L-ascorbate: step 3/4. Its function is as follows. Catalyzes the isomerization of L-xylulose-5-phosphate to L-ribulose-5-phosphate. Is involved in the anaerobic L-ascorbate utilization. In Escherichia coli O8 (strain IAI1), this protein is L-ribulose-5-phosphate 3-epimerase UlaE.